A 467-amino-acid polypeptide reads, in one-letter code: Immunoglobulin superfamily member 21 (467 aa).

The first 24 residues, Met1–Gly24, serve as a signal peptide directing secretion. Residues Tyr25–Ala132 form the Ig-like 1 domain. A disulfide bridge links Cys46 with Cys116. N-linked (GlcNAc...) asparagine glycosylation is found at Asn82 and Asn165. The interval Leu229 to Gln259 is disordered. Residues Ala234–Ser247 show a composition bias toward basic and acidic residues. Positions Pro344–Ile429 constitute an Ig-like 2 domain. Asn407 and Asn444 each carry an N-linked (GlcNAc...) asparagine glycan.

Interacts (Ig-like 1 domain) with NRXN2 (via Laminin G-like 1 domain) in a trans-interaction manner.

Its subcellular location is the postsynaptic cell membrane. In terms of biological role, involved in synaptic inhibition in the brain. Selectively regulates inhibitory presynaptic differentiation through interacting with presynaptic NRXN2. This Homo sapiens (Human) protein is Immunoglobulin superfamily member 21.